A 130-amino-acid chain; its full sequence is Probable 4-amino-4-deoxy-L-arabinose-phosphoundecaprenol flippase subunit ArnF (130 aa).

Residues Met-1–Gly-4 lie on the Cytoplasmic side of the membrane. A helical transmembrane segment spans residues Trp-5–Met-25. Residues His-26 to Pro-44 are Periplasmic-facing. The helical transmembrane segment at Leu-45 to Ala-65 threads the bilayer. The Cytoplasmic segment spans residues Leu-66–Ala-74. Residues Tyr-75 to Phe-95 traverse the membrane as a helical segment. Residues Asn-96–Arg-103 are Periplasmic-facing. The helical transmembrane segment at Leu-104–Lys-124 threads the bilayer. Residues Gly-125 to Arg-130 lie on the Cytoplasmic side of the membrane.

This sequence belongs to the ArnF family. In terms of assembly, heterodimer of ArnE and ArnF.

The protein localises to the cell inner membrane. Its pathway is bacterial outer membrane biogenesis; lipopolysaccharide biosynthesis. Functionally, translocates 4-amino-4-deoxy-L-arabinose-phosphoundecaprenol (alpha-L-Ara4N-phosphoundecaprenol) from the cytoplasmic to the periplasmic side of the inner membrane. The polypeptide is Probable 4-amino-4-deoxy-L-arabinose-phosphoundecaprenol flippase subunit ArnF (Sodalis glossinidius (strain morsitans)).